The sequence spans 725 residues: Prolyl 3-hydroxylase 1 (725 aa).

A signal peptide spans 1 to 14 (MALLLPLLPLLVWA). A TPR 1 repeat occupies 36 to 69 (PDALFAAGAEAYARGDWPAVVLQMERALRARAAI). Residue Asn82 is glycosylated (N-linked (GlcNAc...) asparagine). TPR repeat units lie at residues 136-169 (RSPY…NPEH), 198-231 (HMTE…YFVA), and 294-327 (PSHF…FPND). The stretch at 394 to 441 (KRLREKQKVERETAARISEEIGNLMKEIETLVEEKAKESAEMSKFIRE) forms a coiled coil. 2 N-linked (GlcNAc...) asparagine glycosylation sites follow: Asn460 and Asn533. The Fe2OG dioxygenase domain maps to 557–671 (SHLVCRTAID…RCAIALWFTL (115 aa)). The Fe cation site is built by His580, Asp582, and His652. The active site involves Arg662. Polar residues predominate over residues 701-715 (ETSAEQEPTAATSTA). The interval 701–725 (ETSAEQEPTAATSTAGLHAAGKDEL) is disordered. Positions 722 to 725 (KDEL) match the Prevents secretion from ER motif.

Belongs to the leprecan family. Binds unfolded collagen in a complex with CYPB and CRTAP. Fe cation is required as a cofactor. Requires L-ascorbate as cofactor. In terms of tissue distribution, expressed in embryonic dermis, tendon, cartilage, liver and kidney. Expression in the kidney is restricted to the calyx. In the liver, expression is restricted to the interlobular septum.

It localises to the endoplasmic reticulum. The catalysed reaction is L-prolyl-[collagen] + 2-oxoglutarate + O2 = trans-3-hydroxy-L-prolyl-[collagen] + succinate + CO2. Its function is as follows. Has prolyl 3-hydroxylase activity catalyzing the post-translational formation of 3-hydroxyproline in -Xaa-Pro-Gly-sequences in collagens, especially types IV and V. May be involved in the secretoty pathway of cells. Has growth suppressive activity in fibroblasts. The protein is Prolyl 3-hydroxylase 1 of Gallus gallus (Chicken).